The chain runs to 128 residues: Cytochrome b (128 aa).

3 helical membrane passes run 25 to 45 (FGSMLLSCLTIQIITGFFLAI), 69 to 90 (WIMQNTHAIGXSLFFICIYIHI), and 105 to 125 (WLSGTTLLITLMATASXXMCY). Residues histidine 75 and histidine 89 each coordinate heme b. Histidine 126 contributes to the a ubiquinone binding site.

It belongs to the cytochrome b family. The cytochrome bc1 complex contains 3 respiratory subunits (MT-CYB, CYC1 and UQCRFS1), 2 core proteins (UQCRC1 and UQCRC2) and probably 6 low-molecular weight proteins. Heme b serves as cofactor.

It is found in the mitochondrion inner membrane. Its function is as follows. Component of the ubiquinol-cytochrome c reductase complex (complex III or cytochrome b-c1 complex) that is part of the mitochondrial respiratory chain. The b-c1 complex mediates electron transfer from ubiquinol to cytochrome c. Contributes to the generation of a proton gradient across the mitochondrial membrane that is then used for ATP synthesis. The polypeptide is Cytochrome b (MT-CYB) (Crotalus viridis viridis (Prairie rattlesnake)).